The primary structure comprises 277 residues: Formamidopyrimidine-DNA glycosylase (277 aa).

The active-site Schiff-base intermediate with DNA is Pro2. Glu3 functions as the Proton donor in the catalytic mechanism. Lys59 acts as the Proton donor; for beta-elimination activity in catalysis. His96, Arg115, and Arg158 together coordinate DNA. Residues 243–277 (WVYGRGGNPCRRCGGEILREKRAGRSTHFCPRCQK) form an FPG-type zinc finger. Residue Arg267 is the Proton donor; for delta-elimination activity of the active site.

This sequence belongs to the FPG family. Monomer. It depends on Zn(2+) as a cofactor.

The enzyme catalyses Hydrolysis of DNA containing ring-opened 7-methylguanine residues, releasing 2,6-diamino-4-hydroxy-5-(N-methyl)formamidopyrimidine.. It catalyses the reaction 2'-deoxyribonucleotide-(2'-deoxyribose 5'-phosphate)-2'-deoxyribonucleotide-DNA = a 3'-end 2'-deoxyribonucleotide-(2,3-dehydro-2,3-deoxyribose 5'-phosphate)-DNA + a 5'-end 5'-phospho-2'-deoxyribonucleoside-DNA + H(+). In terms of biological role, involved in base excision repair of DNA damaged by oxidation or by mutagenic agents. Acts as a DNA glycosylase that recognizes and removes damaged bases. Has a preference for oxidized purines, such as 7,8-dihydro-8-oxoguanine (8-oxoG). Has AP (apurinic/apyrimidinic) lyase activity and introduces nicks in the DNA strand. Cleaves the DNA backbone by beta-delta elimination to generate a single-strand break at the site of the removed base with both 3'- and 5'-phosphates. This is Formamidopyrimidine-DNA glycosylase from Heliobacterium modesticaldum (strain ATCC 51547 / Ice1).